A 118-amino-acid polypeptide reads, in one-letter code: MANNRAVRVGEQMKKELSDILIRDIKDPRVRFVTVTGVDVTGDLQQATAFITVLGDEEERKATLAGLEKAKGFIRTELGKRIRLRKTPELSFSFDESIQYGNRIESLLRDLNKNDSNE.

It belongs to the RbfA family. Monomer. Binds 30S ribosomal subunits, but not 50S ribosomal subunits or 70S ribosomes.

The protein resides in the cytoplasm. One of several proteins that assist in the late maturation steps of the functional core of the 30S ribosomal subunit. Associates with free 30S ribosomal subunits (but not with 30S subunits that are part of 70S ribosomes or polysomes). Required for efficient processing of 16S rRNA. May interact with the 5'-terminal helix region of 16S rRNA. The protein is Ribosome-binding factor A of Shouchella clausii (strain KSM-K16) (Alkalihalobacillus clausii).